A 180-amino-acid chain; its full sequence is Inner membrane-spanning protein YciB (180 aa).

The next 5 helical transmembrane spans lie at 25–45 (QNAT…CYFV), 54–74 (IISV…GNSI), 76–96 (IKIK…MSGI), 118–138 (ITLS…NEIV), and 150–170 (FKVF…LPLL).

This sequence belongs to the YciB family.

Its subcellular location is the cell inner membrane. Its function is as follows. Plays a role in cell envelope biogenesis, maintenance of cell envelope integrity and membrane homeostasis. The chain is Inner membrane-spanning protein YciB from Rickettsia canadensis (strain McKiel).